The following is a 59-amino-acid chain: Small, acid-soluble spore protein C1 (59 aa).

It belongs to the alpha/beta-type SASP family. In terms of processing, SASP are degraded in the first minutes of spore germination and provide amino acids for both new protein synthesis and metabolism.

Functionally, SASP are bound to spore DNA. They are double-stranded DNA-binding proteins that cause DNA to change to an a-like conformation. They protect the DNA backbone from chemical and enzymatic cleavage and are thus involved in dormant spore's high resistance to UV light. The chain is Small, acid-soluble spore protein C1 (sspC1) from Clostridium perfringens (strain 13 / Type A).